Here is a 340-residue protein sequence, read N- to C-terminus: Phosphoribosylformylglycinamidine cyclo-ligase (340 aa).

This sequence belongs to the AIR synthase family.

It localises to the cytoplasm. The catalysed reaction is 2-formamido-N(1)-(5-O-phospho-beta-D-ribosyl)acetamidine + ATP = 5-amino-1-(5-phospho-beta-D-ribosyl)imidazole + ADP + phosphate + H(+). The protein operates within purine metabolism; IMP biosynthesis via de novo pathway; 5-amino-1-(5-phospho-D-ribosyl)imidazole from N(2)-formyl-N(1)-(5-phospho-D-ribosyl)glycinamide: step 2/2. The chain is Phosphoribosylformylglycinamidine cyclo-ligase from Streptococcus uberis (strain ATCC BAA-854 / 0140J).